A 444-amino-acid polypeptide reads, in one-letter code: NADH-ubiquinone oxidoreductase chain 4 (444 aa).

13 helical membrane passes run 4–24 (YLFMIIFLIPICLLGNCWWLV), 28–48 (IFLLSFIFMISLYSYSDLSMI), 53–73 (GVDFYSFMLILLSLWICCLMI), 87–107 (NFFVFVVLLLLIMLFCSFSSL), 109–129 (LFSFYIFFESSLVPTLFLILG), 141–161 (VYLMFYTLVASLPLLLVLFSI), 173–193 (LIDFGSFYFLFYVFSIFAFLV), 212–232 (PISGSMILAGILLKLGGYGIF), 245–265 (FNYFVLSLSLFGGVIISFVCF), 272–294 (SLIAYSSVAHMSLVICGLMTMNW), 306–326 (GHGISSSGLFCLSNIIYELLG), 330–350 (LLINKGMINLMPSMTIWWFLL), and 373–393 (IISWSSYMILLLIFLSFFSAV).

This sequence belongs to the complex I subunit 4 family.

The protein localises to the mitochondrion membrane. The enzyme catalyses a ubiquinone + NADH + 5 H(+)(in) = a ubiquinol + NAD(+) + 4 H(+)(out). Core subunit of the mitochondrial membrane respiratory chain NADH dehydrogenase (Complex I) that is believed to belong to the minimal assembly required for catalysis. Complex I functions in the transfer of electrons from NADH to the respiratory chain. The immediate electron acceptor for the enzyme is believed to be ubiquinone. The sequence is that of NADH-ubiquinone oxidoreductase chain 4 (ND4) from Locusta migratoria (Migratory locust).